We begin with the raw amino-acid sequence, 414 residues long: Cyclic di-GMP phosphodiesterase PA4108 (414 aa).

The HD-GYP domain maps to 133-330 (ISASVLRHPN…YPVGALVRLE (198 aa)). Positions 160, 192, 193, 221, 246, and 247 each coordinate a divalent metal cation.

In terms of assembly, monomer.

It carries out the reaction 3',3'-c-di-GMP + 2 H2O = 2 GMP + 2 H(+). Its activity is regulated as follows. Activated by Mg(2+) and Mn(2+). Its function is as follows. Phosphodiesterase (PDE) that catalyzes the hydrolysis of cyclic diguanylate (c-di-GMP) to GMP. Hydrolyzes c-di-GMP to GMP in a two-step reaction, via the linear intermediate 5'-phosphoguanylyl(3'-&gt;5')guanosine (pGpG). In vitro, can use pGpG as an alternative substrate and hydrolyze it into GMP. Acts in regulation of motility, synthesis of virulence determinants and biofilm architecture. This is Cyclic di-GMP phosphodiesterase PA4108 from Pseudomonas aeruginosa (strain ATCC 15692 / DSM 22644 / CIP 104116 / JCM 14847 / LMG 12228 / 1C / PRS 101 / PAO1).